The primary structure comprises 245 residues: Transcriptional regulatory protein VxrB (245 aa).

The 112-residue stretch at 31–142 folds into the Response regulatory domain; it reads TLLLVEDDKN…ELFARIRAQL (112 aa). Residue Asp-78 is modified to 4-aspartylphosphate. A DNA-binding region (ompR/PhoB-type) is located at residues 151–245; sequence DSKVVTSNLT…LRGVGYKMKA (95 aa).

In terms of processing, phosphorylated by VxrA.

The protein resides in the cytoplasm. Its function is as follows. Member of the two-component regulatory system VxrB/VxrA involved in the regulation of diverses processes, including virulence, the type VI secretion system (T6SS) and biofilm formation. VxrB positively regulates the expression of the T6SS, a virulence nanomachine that directly translocates effectors into bacterial or host cells, thereby facilitating colonization by competing with sister cells and intestinal microbiota. In addition, it activates vpsL expression and biofilm formation, and represses motility. May regulate biofilm formation via its regulation of key biofilm regulators and cyclic di-GMP levels. Significantly contributes to both attack and defense via T6SS, while also influencing competition via regulation of biofilm matrix production. Is critical for colonization in the infant mouse model. The sequence is that of Transcriptional regulatory protein VxrB from Vibrio cholerae serotype O1 (strain ATCC 39315 / El Tor Inaba N16961).